A 446-amino-acid chain; its full sequence is Transcription factor Dp-2 (446 aa).

Residue threonine 2 is modified to N-acetylthreonine. Position 24 is a phosphoserine (serine 24). The segment at proline 60–tyrosine 82 is interaction with CEBPA. The Nuclear localization signal motif lies at glycine 103–glutamate 118. At serine 122 the chain carries Phosphoserine. The DNA-binding element occupies glycine 129 to proline 210. Positions aspartate 176–proline 210 match the DEF box motif. The interval asparagine 219 to serine 292 is dimerization. The tract at residues glutamate 229–glutamine 261 is DCB1. The interval leucine 274–serine 330 is DCB2. A compositionally biased stretch (low complexity) spans serine 409–cysteine 419. The disordered stretch occupies residues serine 409–glutamate 446. A compositionally biased stretch (acidic residues) spans asparagine 431 to glutamate 446.

Belongs to the E2F/DP family. In terms of assembly, component of the DRTF1/E2F transcription factor complex. Forms heterodimers with E2F family members. The complex can interact with hypophosphorylated retinoblastoma protein RB1 and related proteins (RBL1 and RBL2) that inhibit the E2F transactivation domain. During the cell cycle, RB becomes phosphorylated in mid-to-late G1 phase, detaches from the DRTF1/E2F complex rendering E2F transcriptionally active. Viral oncoproteins, notably E1A, T-antigen and HPV E7, are capable of sequestering RB protein, thus releasing the active complex. Interacts with GMCL. Component of the DREAM complex (also named LINC complex) at least composed of E2F4, E2F5, LIN9, LIN37, LIN52, LIN54, MYBL1, MYBL2, RBL1, RBL2, RBBP4, TFDP1 and TFDP2. The complex exists in quiescent cells where it represses cell cycle-dependent genes. It dissociates in S phase when LIN9, LIN37, LIN52 and LIN54 form a subcomplex that binds to MYBL2. The complex TFDP2:E2F1 interacts with CEBPA; the interaction prevents CEBPA binding to target genes promoters and represses its transcriptional activity. In terms of processing, ser-24 is probably phosphorylated by CDK2. As to expression, high levels in heart and skeletal muscle. Also found in placenta, kidney, brain, lung and liver. The presence as well as the abundance of the different transcripts appear to vary significantly in different tissues and cell lines.

The protein localises to the nucleus. Can stimulate E2F-dependent transcription. Binds DNA cooperatively with E2F family members through the E2 recognition site, 5'-TTTC[CG]CGC-3', found in the promoter region of a number of genes whose products are involved in cell cycle regulation or in DNA replication. The TFDP2:E2F complex functions in the control of cell-cycle progression from G1 to S phase. The E2F1:DP complex appears to mediate both cell proliferation and apoptosis. Blocks adipocyte differentiation by repressing CEBPA binding to its target gene promoters. This chain is Transcription factor Dp-2 (TFDP2), found in Homo sapiens (Human).